The sequence spans 546 residues: Germacrene-D synthase (546 aa).

Asp303, Asp307, Asp448, and Glu456 together coordinate Mg(2+). Positions 303-307 match the DDXXD motif motif; the sequence is DDIYD.

Belongs to the terpene synthase family. It depends on Mg(2+) as a cofactor. The cofactor is Mn(2+).

It carries out the reaction (2E,6E)-farnesyl diphosphate = (-)-germacrene D + diphosphate. Its pathway is secondary metabolite biosynthesis; terpenoid biosynthesis. Its function is as follows. Sesquiterpene synthase that catalyzes the formation of germacrene D from trans,trans-farnesyl diphosphate (FPP). This is Germacrene-D synthase (GDS) from Ocimum basilicum (Sweet basil).